Here is an 88-residue protein sequence, read N- to C-terminus: UPF0297 protein RBAM_024500 (88 aa).

The protein belongs to the UPF0297 family.

This is UPF0297 protein RBAM_024500 from Bacillus velezensis (strain DSM 23117 / BGSC 10A6 / LMG 26770 / FZB42) (Bacillus amyloliquefaciens subsp. plantarum).